A 122-amino-acid polypeptide reads, in one-letter code: Large ribosomal subunit protein uL14 (122 aa).

It belongs to the universal ribosomal protein uL14 family. As to quaternary structure, part of the 50S ribosomal subunit. Forms a cluster with proteins L3 and L19. In the 70S ribosome, L14 and L19 interact and together make contacts with the 16S rRNA in bridges B5 and B8.

Functionally, binds to 23S rRNA. Forms part of two intersubunit bridges in the 70S ribosome. This chain is Large ribosomal subunit protein uL14, found in Shewanella woodyi (strain ATCC 51908 / MS32).